Here is a 238-residue protein sequence, read N- to C-terminus: Thrombin-like enzyme halystase (238 aa).

In terms of domain architecture, Peptidase S1 spans 1–229 (IIGGDECNIN…HLDWIKSIIA (229 aa)). Cystine bridges form between Cys-7/Cys-141, Cys-28/Cys-44, Cys-76/Cys-236, Cys-120/Cys-190, Cys-152/Cys-169, and Cys-180/Cys-205. His-43 acts as the Charge relay system in catalysis. Asn-81 carries an N-linked (GlcNAc...) asparagine glycan. Asp-88 functions as the Charge relay system in the catalytic mechanism. An N-linked (GlcNAc...) asparagine glycan is attached at Asn-100. The active-site Charge relay system is Ser-184.

This sequence belongs to the peptidase S1 family. Snake venom subfamily. Monomer. Expressed by the venom gland.

It localises to the secreted. Its activity is regulated as follows. Inhibited by diisopropylfluorophosphate (DFP), PMSF and leupeptin. Thrombin-like snake venom serine protease. Cleaves fibrinogen (beta chain of fibrinogen (FGB) and more slowly alpha chain (FGA)) without inducing fibrin clotting and cleaves kininogen to produce bradykinin (KNG), resulting in the reduction of blood pressure. The chain is Thrombin-like enzyme halystase from Gloydius blomhoffii (Mamushi).